A 210-amino-acid chain; its full sequence is Thymidylate kinase (210 aa).

An ATP-binding site is contributed by 11-18 (GGEGAGKT).

Belongs to the thymidylate kinase family.

The catalysed reaction is dTMP + ATP = dTDP + ADP. In terms of biological role, phosphorylation of dTMP to form dTDP in both de novo and salvage pathways of dTTP synthesis. This chain is Thymidylate kinase (tmk), found in Halalkalibacterium halodurans (strain ATCC BAA-125 / DSM 18197 / FERM 7344 / JCM 9153 / C-125) (Bacillus halodurans).